We begin with the raw amino-acid sequence, 423 residues long: Histidine--tRNA ligase (423 aa).

The protein belongs to the class-II aminoacyl-tRNA synthetase family. Homodimer.

The protein resides in the cytoplasm. It carries out the reaction tRNA(His) + L-histidine + ATP = L-histidyl-tRNA(His) + AMP + diphosphate + H(+). The polypeptide is Histidine--tRNA ligase (Bacillus cytotoxicus (strain DSM 22905 / CIP 110041 / 391-98 / NVH 391-98)).